The sequence spans 296 residues: 4-hydroxybenzoate octaprenyltransferase (296 aa).

8 consecutive transmembrane segments (helical) span residues 29–49, 52–72, 103–123, 151–171, 176–196, 220–240, 243–263, and 275–295; these read AGWL…AGGF, WHLL…GCCI, LVLG…TNAI, VLGV…LGEV, WLLM…YAMV, VILL…MPYV, ALFT…YTLI, and FRLN…SYAL.

This sequence belongs to the UbiA prenyltransferase family. Mg(2+) is required as a cofactor.

Its subcellular location is the cell inner membrane. The enzyme catalyses all-trans-octaprenyl diphosphate + 4-hydroxybenzoate = 4-hydroxy-3-(all-trans-octaprenyl)benzoate + diphosphate. It participates in cofactor biosynthesis; ubiquinone biosynthesis. Its function is as follows. Catalyzes the prenylation of para-hydroxybenzoate (PHB) with an all-trans polyprenyl group. Mediates the second step in the final reaction sequence of ubiquinone-8 (UQ-8) biosynthesis, which is the condensation of the polyisoprenoid side chain with PHB, generating the first membrane-bound Q intermediate 3-octaprenyl-4-hydroxybenzoate. The chain is 4-hydroxybenzoate octaprenyltransferase from Albidiferax ferrireducens (strain ATCC BAA-621 / DSM 15236 / T118) (Rhodoferax ferrireducens).